The following is a 476-amino-acid chain: Bifunctional protein GlmU (476 aa).

The segment at 1–232 (MDNLAAIILA…PVEVMGINDR (232 aa)) is pyrophosphorylase. UDP-N-acetyl-alpha-D-glucosamine contacts are provided by residues 9 to 12 (LAAG), Lys23, Gln75, and 80 to 81 (GT). Asp105 is a Mg(2+) binding site. Positions 142, 157, 172, and 230 each coordinate UDP-N-acetyl-alpha-D-glucosamine. Asn230 serves as a coordination point for Mg(2+). The tract at residues 233-253 (VQLAEAARHARRRIAEEHMLN) is linker. The tract at residues 254–476 (GVTLVDPAAT…EGWKLRKRDQ (223 aa)) is N-acetyltransferase. 2 residues coordinate UDP-N-acetyl-alpha-D-glucosamine: Arg353 and Lys371. The Proton acceptor role is filled by His383. UDP-N-acetyl-alpha-D-glucosamine contacts are provided by Tyr386 and Asn397. Acetyl-CoA is bound by residues 406-407 (NY), Ser425, Ala443, and Arg460.

It in the N-terminal section; belongs to the N-acetylglucosamine-1-phosphate uridyltransferase family. In the C-terminal section; belongs to the transferase hexapeptide repeat family. In terms of assembly, homotrimer. Mg(2+) serves as cofactor.

It is found in the cytoplasm. It carries out the reaction alpha-D-glucosamine 1-phosphate + acetyl-CoA = N-acetyl-alpha-D-glucosamine 1-phosphate + CoA + H(+). The catalysed reaction is N-acetyl-alpha-D-glucosamine 1-phosphate + UTP + H(+) = UDP-N-acetyl-alpha-D-glucosamine + diphosphate. It participates in nucleotide-sugar biosynthesis; UDP-N-acetyl-alpha-D-glucosamine biosynthesis; N-acetyl-alpha-D-glucosamine 1-phosphate from alpha-D-glucosamine 6-phosphate (route II): step 2/2. The protein operates within nucleotide-sugar biosynthesis; UDP-N-acetyl-alpha-D-glucosamine biosynthesis; UDP-N-acetyl-alpha-D-glucosamine from N-acetyl-alpha-D-glucosamine 1-phosphate: step 1/1. Its pathway is bacterial outer membrane biogenesis; LPS lipid A biosynthesis. Its function is as follows. Catalyzes the last two sequential reactions in the de novo biosynthetic pathway for UDP-N-acetylglucosamine (UDP-GlcNAc). The C-terminal domain catalyzes the transfer of acetyl group from acetyl coenzyme A to glucosamine-1-phosphate (GlcN-1-P) to produce N-acetylglucosamine-1-phosphate (GlcNAc-1-P), which is converted into UDP-GlcNAc by the transfer of uridine 5-monophosphate (from uridine 5-triphosphate), a reaction catalyzed by the N-terminal domain. The chain is Bifunctional protein GlmU from Geobacter sulfurreducens (strain ATCC 51573 / DSM 12127 / PCA).